Consider the following 105-residue polypeptide: Mini zinc finger protein 1 (105 aa).

Positions 1–29 (MGPQQDRSAAKPYANGSTAAAAAAGRKEN) are disordered. Residues 35–84 (YRECQRNHAASIGGHAVDGCREFMASGAEGTAAALLCAACGCHRSFHRRE) form a ZF-HD dimerization-type; degenerate zinc finger.

Homo- and heterodimers.

It is found in the cytoplasm. Its function is as follows. Inhibits zinc finger homeodomain (ZHD) transcription factors, by interacting with them to prevent both their nuclear localization and their DNA-binding properties. This chain is Mini zinc finger protein 1 (MIF1), found in Oryza sativa subsp. indica (Rice).